A 356-amino-acid chain; its full sequence is UDP-N-acetylglucosamine--N-acetylmuramyl-(pentapeptide) pyrophosphoryl-undecaprenol N-acetylglucosamine transferase (356 aa).

UDP-N-acetyl-alpha-D-glucosamine-binding positions include 12-14 (TGG), Asn-124, Arg-163, Ser-188, Ile-242, and Gln-287.

Belongs to the glycosyltransferase 28 family. MurG subfamily.

The protein resides in the cell inner membrane. It catalyses the reaction di-trans,octa-cis-undecaprenyl diphospho-N-acetyl-alpha-D-muramoyl-L-alanyl-D-glutamyl-meso-2,6-diaminopimeloyl-D-alanyl-D-alanine + UDP-N-acetyl-alpha-D-glucosamine = di-trans,octa-cis-undecaprenyl diphospho-[N-acetyl-alpha-D-glucosaminyl-(1-&gt;4)]-N-acetyl-alpha-D-muramoyl-L-alanyl-D-glutamyl-meso-2,6-diaminopimeloyl-D-alanyl-D-alanine + UDP + H(+). It functions in the pathway cell wall biogenesis; peptidoglycan biosynthesis. Functionally, cell wall formation. Catalyzes the transfer of a GlcNAc subunit on undecaprenyl-pyrophosphoryl-MurNAc-pentapeptide (lipid intermediate I) to form undecaprenyl-pyrophosphoryl-MurNAc-(pentapeptide)GlcNAc (lipid intermediate II). This chain is UDP-N-acetylglucosamine--N-acetylmuramyl-(pentapeptide) pyrophosphoryl-undecaprenol N-acetylglucosamine transferase, found in Pseudomonas syringae pv. syringae (strain B728a).